Here is a 458-residue protein sequence, read N- to C-terminus: MTNYAIILAAGKGTRMKSDLPKVLHQVSGLTMLEHVFRSVAHITPQMNVTVIGHKAELVQEVLKEKSEFVLQTEQLGTGHAVMMAEEKLADLEGNTLVIAGDTPLITGESLKNLIDFHVNHKNVATILTAKAEDPFGYGRIIRNHDDEVVKIVEQKDANEYEQKVKEINTGTYVFDNKRLFEALKNINTNNAQGEYYLTDVISIFRENKEKVGAYVLRDFNESLGVNDRVALATAESVMRRRINKAHMINGVTFQNPDATYIEADVSIAADVMIEANVSLKGNSCIGAKSVLTNGTCIVDAQIGESVVITNSTIEESSIADGVTVGPYAHIRPGSQLDKNVHIGNFVEVKGSHIGENTKAGHLTYIGNAVVGSDVNFGAGTITVNYDGKNKYKTVIGNNVFVGSNSTLIAPLEIGDNALTAAGSTITKNVEPDSIAIGRSRQVIKEGYAKRLPHYPQK.

The tract at residues 1–229 is pyrophosphorylase; it reads MTNYAIILAA…FNESLGVNDR (229 aa). Residues 8–11, K22, Q72, and 77–78 contribute to the UDP-N-acetyl-alpha-D-glucosamine site; these read LAAG and GT. D102 serves as a coordination point for Mg(2+). 4 residues coordinate UDP-N-acetyl-alpha-D-glucosamine: G139, E154, N169, and N227. N227 provides a ligand contact to Mg(2+). The interval 230–250 is linker; the sequence is VALATAESVMRRRINKAHMIN. The N-acetyltransferase stretch occupies residues 251 to 458; sequence GVTFQNPDAT…AKRLPHYPQK (208 aa). Residues R332 and K350 each contribute to the UDP-N-acetyl-alpha-D-glucosamine site. H362 functions as the Proton acceptor in the catalytic mechanism. Y365 and N376 together coordinate UDP-N-acetyl-alpha-D-glucosamine. Residues A379, 385–386, S404, A422, and R439 contribute to the acetyl-CoA site; that span reads NY.

This sequence in the N-terminal section; belongs to the N-acetylglucosamine-1-phosphate uridyltransferase family. In the C-terminal section; belongs to the transferase hexapeptide repeat family. As to quaternary structure, homotrimer. Mg(2+) serves as cofactor.

The protein localises to the cytoplasm. The catalysed reaction is alpha-D-glucosamine 1-phosphate + acetyl-CoA = N-acetyl-alpha-D-glucosamine 1-phosphate + CoA + H(+). The enzyme catalyses N-acetyl-alpha-D-glucosamine 1-phosphate + UTP + H(+) = UDP-N-acetyl-alpha-D-glucosamine + diphosphate. It participates in nucleotide-sugar biosynthesis; UDP-N-acetyl-alpha-D-glucosamine biosynthesis; N-acetyl-alpha-D-glucosamine 1-phosphate from alpha-D-glucosamine 6-phosphate (route II): step 2/2. The protein operates within nucleotide-sugar biosynthesis; UDP-N-acetyl-alpha-D-glucosamine biosynthesis; UDP-N-acetyl-alpha-D-glucosamine from N-acetyl-alpha-D-glucosamine 1-phosphate: step 1/1. Its pathway is bacterial outer membrane biogenesis; LPS lipid A biosynthesis. Its function is as follows. Catalyzes the last two sequential reactions in the de novo biosynthetic pathway for UDP-N-acetylglucosamine (UDP-GlcNAc). The C-terminal domain catalyzes the transfer of acetyl group from acetyl coenzyme A to glucosamine-1-phosphate (GlcN-1-P) to produce N-acetylglucosamine-1-phosphate (GlcNAc-1-P), which is converted into UDP-GlcNAc by the transfer of uridine 5-monophosphate (from uridine 5-triphosphate), a reaction catalyzed by the N-terminal domain. This Streptococcus uberis (strain ATCC BAA-854 / 0140J) protein is Bifunctional protein GlmU.